We begin with the raw amino-acid sequence, 376 residues long: Homocitrate synthase (376 aa).

Positions 4–259 (WKIIDSTLRE…RRKYKLEMLP (256 aa)) constitute a Pyruvate carboxyltransferase domain. Arg-12 serves as a coordination point for 2-oxoglutarate. A Mg(2+)-binding site is contributed by Glu-13. His-72 provides a ligand contact to 2-oxoglutarate. Asp-92 provides a ligand contact to L-lysine. Arg-133 contributes to the 2-oxoglutarate binding site. The L-lysine site is built by Ser-135 and Thr-166. Thr-166 contacts 2-oxoglutarate. Residues His-195 and His-197 each coordinate Mg(2+). Residue His-292 is the Proton acceptor of the active site.

Belongs to the alpha-IPM synthase/homocitrate synthase family. Homocitrate synthase LYS20/LYS21 subfamily. As to quaternary structure, exists in an equilibrium between monomer and homodimer. Requires Mg(2+) as cofactor. Mn(2+) is required as a cofactor.

The protein resides in the cytoplasm. It catalyses the reaction acetyl-CoA + 2-oxoglutarate + H2O = (2R)-homocitrate + CoA + H(+). It carries out the reaction oxaloacetate + acetyl-CoA + H2O = citrate + CoA + H(+). Its pathway is amino-acid biosynthesis; L-lysine biosynthesis via AAA pathway; L-alpha-aminoadipate from 2-oxoglutarate: step 1/5. Is highly and competitively inhibited by lysine that binds to the active site and competes with 2-oxoglutarate. Is also slightly inhibited by arginine and 2-aminoethylcysteine. Its function is as follows. Catalyzes the aldol-type condensation of 2-oxoglutarate with acetyl-CoA to yield homocitrate. Carries out the first step of the alpha-aminoadipate (AAA) lysine biosynthesis pathway. To a lesser extent, can also use oxaloacetate in place of 2-oxoglutarate, leading to citrate. Does not display 2-isopropylmalate synthase activity since it cannot use 2-oxoisovalerate. The protein is Homocitrate synthase of Thermus thermophilus (strain ATCC BAA-163 / DSM 7039 / HB27).